The sequence spans 411 residues: Putative ion-transport protein YfeO (411 aa).

11 helical membrane passes run 9 to 29, 54 to 74, 99 to 119, 149 to 169, 186 to 206, 223 to 243, 258 to 278, 296 to 316, 322 to 342, 343 to 363, and 386 to 406; these read MLLLSLPALIIGVASSLVLIA, DSPFWIVGMLTLTGVVVGLII, ALPGLLLALIIGLAGGVSLGP, ILASAGTIGALFGTPVAAALI, LFAPLMAAAAGSLTTSLFFHP, IASGAIVAAIAIAAGMVAVWC, VLILGIGGFILGILGVIGGPL, LGAGDYFTLAVVKLAALVIAA, GGRIFPAVFIGAALGLMLHAH, VEAVPAAITVSCAILGLVLVV, and LLCIVMLPAWLLLAGKPLLAA.

Belongs to the chloride channel (TC 2.A.49) family.

The protein resides in the cell membrane. The polypeptide is Putative ion-transport protein YfeO (Salmonella choleraesuis (strain SC-B67)).